The chain runs to 444 residues: ATP-dependent RNA helicase DBP8 (444 aa).

The short motif at 3 to 31 is the Q motif element; it reads QSFKELGVAKWLSESLEAMKIHSPTSIQS. The region spanning 34–210 is the Helicase ATP-binding domain; that stretch reads IPEILKGRDC…DKPRAEGKLP (177 aa). Position 47 to 54 (47 to 54) interacts with ATP; sequence AKTGSGKT. The DEAD box signature appears at 156–159; that stretch reads DEAD. One can recognise a Helicase C-terminal domain in the interval 244 to 390; the sequence is YLTSILKLPK…LLEGVDDDKV (147 aa). The span at 402 to 418 shows a compositional bias: basic and acidic residues; the sequence is KREAMLDMDKESFGERR. The tract at residues 402–444 is disordered; the sequence is KREAMLDMDKESFGERRKVNKKKRAVEEPSGKRQQKKVKKVKS. Basic residues predominate over residues 434–444; it reads RQQKKVKKVKS.

Belongs to the DEAD box helicase family. DDX49/DBP8 subfamily.

The protein resides in the nucleus. Its subcellular location is the nucleolus. The enzyme catalyses ATP + H2O = ADP + phosphate + H(+). In terms of biological role, ATP-binding RNA helicase involved in 40S ribosomal subunit biogenesis and is required for the normal formation of 18S rRNAs through pre-rRNA processing at A0, A1 and A2 sites. Required for vegetative growth. The sequence is that of ATP-dependent RNA helicase DBP8 (DBP8) from Lodderomyces elongisporus (strain ATCC 11503 / CBS 2605 / JCM 1781 / NBRC 1676 / NRRL YB-4239) (Yeast).